Here is a 332-residue protein sequence, read N- to C-terminus: D-2-hydroxyacid dehydrogenase (NAD(+)) (332 aa).

Catalysis depends on residues Arg237 and Glu266. The active-site Proton donor is the His298.

Belongs to the D-isomer specific 2-hydroxyacid dehydrogenase family. In terms of assembly, monomer.

It catalyses the reaction a (2R)-2-hydroxycarboxylate + NAD(+) = a 2-oxocarboxylate + NADH + H(+). The catalysed reaction is (2R)-hydroxy-4-methylpentanoate + NAD(+) = 4-methyl-2-oxopentanoate + NADH + H(+). It functions in the pathway amino-acid degradation; L-leucine degradation. Functionally, involved in the reductive branch of L-leucine fermentation. Catalyzes the NADH-dependent reduction of 4-methyl-2-oxopentanoate (2-oxoisocaproate) to (R)-2-hydroxy-4-methylpentanoate ((R)-2-hydroxyisocaproate). For the reverse reaction, the enzyme accepts (R)- but not (S)-2-hydroxy-4-methylpentanoate. Can also use 2-oxopentanoate, 2-oxohexanoate and phenylpyruvate but not 2-oxoisovalerate and 2-oxobutyrate. Cannot use NADPH. The chain is D-2-hydroxyacid dehydrogenase (NAD(+)) from Clostridioides difficile (Peptoclostridium difficile).